The following is a 429-amino-acid chain: Enolase (429 aa).

Residue Q168 participates in (2R)-2-phosphoglycerate binding. Catalysis depends on E210, which acts as the Proton donor. Positions 247, 288, and 315 each coordinate Mg(2+). Residues K340, R369, S370, and K391 each coordinate (2R)-2-phosphoglycerate. The Proton acceptor role is filled by K340.

The protein belongs to the enolase family. The cofactor is Mg(2+).

Its subcellular location is the cytoplasm. It is found in the secreted. The protein resides in the cell surface. The catalysed reaction is (2R)-2-phosphoglycerate = phosphoenolpyruvate + H2O. It functions in the pathway carbohydrate degradation; glycolysis; pyruvate from D-glyceraldehyde 3-phosphate: step 4/5. Its function is as follows. Catalyzes the reversible conversion of 2-phosphoglycerate (2-PG) into phosphoenolpyruvate (PEP). It is essential for the degradation of carbohydrates via glycolysis. This chain is Enolase, found in Nostoc sp. (strain PCC 7120 / SAG 25.82 / UTEX 2576).